The chain runs to 62 residues: Large ribosomal subunit protein bL28 (62 aa).

The protein belongs to the bacterial ribosomal protein bL28 family.

This Aster yellows witches'-broom phytoplasma (strain AYWB) protein is Large ribosomal subunit protein bL28.